Reading from the N-terminus, the 359-residue chain is MTLESMMACCLSDEVKESKRINAEIEKQLRRDKRDARRELKLLLLGTGESGKSTFIKQMRIIHGAGYSEEDKRGFTKLVYQNIFTAMQAMIRAMETLKILYKYEQNKANALLIREVDVEKVTTFEHQYVSAIKTLWEDPGIQECYDRRREYQLSDSAKYYLTDVDRIATLGYLPTQQDVLRVRVPTTGIIEYPFDLENIIFRMVDVGGQRSERRKWIHCFENVTSIMFLVALSEYDQVLVESDNENRMEESKALFRTIITYPWFQNSSVILFLNKKDLLEDKILYSHLVDYFPEFDGPQRDAQAAREFILKMFVDLNPDSDKIIYSHFTCATDTENIRFVFAAVKDTILQLNLKEYNLV.

S-palmitoyl cysteine attachment occurs at residues C9 and C10. A G-alpha domain is found at 38–359 (RELKLLLLGT…QLNLKEYNLV (322 aa)). The G1 motif stretch occupies residues 41-54 (KLLLLGTGESGKST). Residues 46-53 (GTGESGKS) and 180-183 (LRVR) contribute to the GTP site. S53 provides a ligand contact to Mg(2+). The G2 motif stretch occupies residues 178 to 186 (DVLRVRVPT). Mg(2+) is bound at residue T186. The G3 motif stretch occupies residues 201–210 (FRMVDVGGQR). Q209 carries the deamidated glutamine; by Photorhabdus PAU_02230 modification. The interval 270–277 (ILFLNKKD) is G4 motif. GTP-binding positions include 274 to 277 (NKKD) and A331. The segment at 329 to 334 (TCATDT) is G5 motif.

This sequence belongs to the G-alpha family. G(q) subfamily. G proteins are composed of 3 units; alpha, beta and gamma. The alpha chain contains the guanine nucleotide binding site. Interacts with RGS22. Interacts with NTSR1. In terms of assembly, (Microbial infection) Interacts with human cytomegalovirus (HHV-5) US28. Post-translationally, (Microbial infection) Deamidated at Gln-209 by Photorhabdus asymbiotica toxin PAU_02230, blocking GTP hydrolysis of heterotrimeric GNAQ or GNA11 and G-alphai (GNAI1, GNAI2 or GNAI3) proteins, thereby activating RhoA. Expressed in testis.

The protein localises to the cell membrane. The protein resides in the cytoplasm. It carries out the reaction GTP + H2O = GDP + phosphate + H(+). Its function is as follows. Guanine nucleotide-binding proteins (G proteins) function as transducers downstream of G protein-coupled receptors (GPCRs) in numerous signaling cascades. The alpha chain contains the guanine nucleotide binding site and alternates between an active, GTP-bound state and an inactive, GDP-bound state. Signaling by an activated GPCR promotes GDP release and GTP binding. The alpha subunit has a low GTPase activity that converts bound GTP to GDP, thereby terminating the signal. Both GDP release and GTP hydrolysis are modulated by numerous regulatory proteins. Signaling is mediated via phospholipase C-beta-dependent inositol lipid hydrolysis for signal propagation: activates phospholipase C-beta: following GPCR activation, GNA11 activates PLC-beta (PLCB1, PLCB2, PLCB3 or PLCB4), leading to production of diacylglycerol (DAG) and inositol 1,4,5-trisphosphate (IP3). Transduces FFAR4 signaling in response to long-chain fatty acids (LCFAs). Together with GNAQ, required for heart development. In the respiratory epithelium, transmits OXGR1-dependent signals that lead to downstream intracellular Ca(2+) release and mucocilliary clearance of airborne pathogens. This Homo sapiens (Human) protein is Guanine nucleotide-binding protein subunit alpha-11 (GNA11).